The chain runs to 77 residues: MDYQRLLFLFAVAMVITTTVALPQDTALMDGQLQKRGTPCKCLGYTGVYWFMITRCPNGHGYNLSCPYFLGVCCVKK.

Residues 1 to 21 form the signal peptide; the sequence is MDYQRLLFLFAVAMVITTTVA. The propeptide occupies 22-34; it reads LPQDTALMDGQLQ. Disulfide bonds link Cys40/Cys73, Cys42/Cys66, and Cys56/Cys74.

This sequence belongs to the sea anemone type 3 (BDS) potassium channel toxin family.

The protein localises to the secreted. Its subcellular location is the nematocyst. Toxin that inhibits rat ASIC3 channels (IC(50)=13.8 uM). Also able to bind T.californica muscle-type nicotinic acetylcholine receptors (nAChR), and human alpha-7/CHRNA7 nicotinic acetylcholine receptors. The polypeptide is Pi-stichotoxin-Hmg5a (Heteractis magnifica (Magnificent sea anemone)).